Here is a 915-residue protein sequence, read N- to C-terminus: Hexokinase HKDC1 (915 aa).

The segment at 1–20 (MFAVHLVAFYFTKLKEDQIK) is mitochondrial-binding peptide (MBP). Hexokinase domains lie at 16-458 (EDQI…MVTA) and 464-903 (QAQR…LITA). ATP contacts are provided by residues Arg-30 and 84–89 (DLGGSK). The hexokinase small subdomain 1 stretch occupies residues 73 to 207 (DGSENGEFLS…DLDVDILALV (135 aa)). 84-91 (DLGGSKFR) contributes to the D-glucose 6-phosphate binding site. D-glucose-binding positions include Ser-155, 172–173 (TK), and 208–209 (ND). Residues 208–447 (NDTVGTMMTC…CDVRFLLSES (240 aa)) are hexokinase large subdomain 1. The D-glucose 6-phosphate site is built by Asp-209 and Thr-232. D-glucose-binding positions include Asn-235, Glu-260, and 291–294 (QLFE). Residue 413–415 (DGT) participates in D-glucose 6-phosphate binding. 425 to 426 (KR) contacts ATP. D-glucose 6-phosphate contacts are provided by residues Ser-449 and 532–536 (DLGGT). The tract at residues 521-652 (DGTEKGKFLA…EFDLDIVAIV (132 aa)) is hexokinase small subdomain 2. 532–537 (DLGGTN) lines the ATP pocket. D-glucose is bound by residues 600 to 601 (SF), 617 to 618 (TK), and 653 to 654 (ND). The hexokinase large subdomain 2 stretch occupies residues 653 to 892 (NDTVGTMMTC…CDVTFMLSED (240 aa)). The D-glucose 6-phosphate site is built by Asp-654 and Thr-677. ATP is bound at residue Thr-677. Residues 679–680 (SN), Glu-705, and Glu-739 contribute to the D-glucose site. ATP is bound by residues 744–745 (GM), 781–785 (TKFLS), and 860–864 (TLYKL). D-glucose 6-phosphate contacts are provided by residues 858–860 (DGT) and Ser-894.

The protein belongs to the hexokinase family. Widely expressed. Detected in retina, brain, cerebellum, liver, lung, kidney, spleen, pancreas and intestine.

The protein localises to the cytoplasm. The protein resides in the mitochondrion membrane. It is found in the photoreceptor inner segment. The enzyme catalyses a D-hexose + ATP = a D-hexose 6-phosphate + ADP + H(+). It carries out the reaction D-glucose + ATP = D-glucose 6-phosphate + ADP + H(+). Its pathway is carbohydrate metabolism; hexose metabolism. It participates in carbohydrate degradation; glycolysis; D-glyceraldehyde 3-phosphate and glycerone phosphate from D-glucose: step 1/4. Functionally, catalyzes the phosphorylation of hexose to hexose 6-phosphate, although at very low level compared to other hexokinases. Has low glucose phosphorylating activity compared to other hexokinases. Involved in glucose homeostasis and hepatic lipid accumulation. Required to maintain whole-body glucose homeostasis during pregnancy; however additional evidences are required to confirm this role. The chain is Hexokinase HKDC1 from Mus musculus (Mouse).